Here is a 278-residue protein sequence, read N- to C-terminus: Large ribosomal subunit protein uL2 (278 aa).

Disordered stretches follow at residues 1–59 (MAIR…GGHK) and 222–278 (RGAA…NKKR). Polar residues predominate over residues 16-27 (SSVSEFSEITRS). Composition is skewed to basic residues over residues 45 to 59 (VHGH…GGHK) and 269 to 278 (VRRRRPNKKR).

It belongs to the universal ribosomal protein uL2 family. Part of the 50S ribosomal subunit. Forms a bridge to the 30S subunit in the 70S ribosome.

One of the primary rRNA binding proteins. Required for association of the 30S and 50S subunits to form the 70S ribosome, for tRNA binding and peptide bond formation. It has been suggested to have peptidyltransferase activity; this is somewhat controversial. Makes several contacts with the 16S rRNA in the 70S ribosome. In Corynebacterium urealyticum (strain ATCC 43042 / DSM 7109), this protein is Large ribosomal subunit protein uL2.